We begin with the raw amino-acid sequence, 206 residues long: Thymidylate kinase (206 aa).

Residue 10 to 17 (GIDGAGKS) coordinates ATP.

The protein belongs to the thymidylate kinase family.

It catalyses the reaction dTMP + ATP = dTDP + ADP. Phosphorylation of dTMP to form dTDP in both de novo and salvage pathways of dTTP synthesis. This is Thymidylate kinase (tmk) from Neisseria meningitidis serogroup A / serotype 4A (strain DSM 15465 / Z2491).